Reading from the N-terminus, the 121-residue chain is UPF0102 protein Mvan_2202 (121 aa).

It belongs to the UPF0102 family.

This is UPF0102 protein Mvan_2202 from Mycolicibacterium vanbaalenii (strain DSM 7251 / JCM 13017 / BCRC 16820 / KCTC 9966 / NRRL B-24157 / PYR-1) (Mycobacterium vanbaalenii).